A 224-amino-acid chain; its full sequence is Peptidyl-prolyl cis-trans isomerase FKBP3 (224 aa).

At Ala-2 the chain carries N-acetylalanine. Ser-36 bears the Phosphoserine mark. Residues 89–102 (KLNEDKPKETKSEE) are compositionally biased toward basic and acidic residues. The interval 89-111 (KLNEDKPKETKSEETLDEGPPKY) is disordered. N6-acetyllysine is present on Lys-99. Residues 128 to 224 (GDVVHCWYTG…TFEVELVDID (97 aa)) form the PPIase FKBP-type domain. A Phosphoserine modification is found at Ser-152. Lys-170 is subject to N6-acetyllysine.

The protein belongs to the FKBP-type PPIase family.

It is found in the nucleus. The enzyme catalyses [protein]-peptidylproline (omega=180) = [protein]-peptidylproline (omega=0). With respect to regulation, inhibited preferentially by rapamycin over FK506. Its function is as follows. FK506- and rapamycin-binding proteins (FKBPs) constitute a family of receptors for the two immunosuppressants which inhibit T-cell proliferation by arresting two distinct cytoplasmic signal transmission pathways. PPIases accelerate the folding of proteins. The polypeptide is Peptidyl-prolyl cis-trans isomerase FKBP3 (FKBP3) (Homo sapiens (Human)).